A 603-amino-acid chain; its full sequence is Podocalyxin-like protein 2 (603 aa).

The N-terminal stretch at 1 to 28 is a signal peptide; sequence MARPLRAARLPPPLLLLLAAGASLGAYA. Over 29-499 the chain is Extracellular; sequence VGVDEPGPEG…ATQVRSDYGT (471 aa). The tract at residues 53–92 is disordered; the sequence is FEPLDSEEPSEAMGLDAGLAPGSGFPSEDSEESRLLQPPQ. O-linked (Xyl...) (chondroitin sulfate) serine glycosylation is present at S75. Position 93 is a sulfotyrosine (Y93). The N-linked (GlcNAc...) asparagine glycan is linked to N101. A Sulfotyrosine modification is found at Y113. Residues 124 to 368 are disordered; that stretch reads SMEDPGQAPD…LEGQAAEAHS (245 aa). Residues 156 to 187 are compositionally biased toward acidic residues; it reads QEEEEEEEEEEEEREEEEREKEAEEEEEEEEL. Residues 196–216 are compositionally biased toward low complexity; sequence ATAQAHAPSPSTSSSTSSQSP. 3 stretches are compositionally biased toward polar residues: residues 240–266, 302–314, and 339–349; these read VKPT…QESG, ALPS…TVPP, and DTESTPSSATW. The N-linked (GlcNAc...) asparagine glycan is linked to N260. N394 is a glycosylation site (N-linked (GlcNAc...) asparagine). The chain crosses the membrane as a helical span at residues 500 to 520; the sequence is LFVVLVIIGVICFIIIVLGLL. The Cytoplasmic segment spans residues 521–603; that stretch reads YNCWQRRMPK…SDVFEEDTHL (83 aa). Positions 558–570 are enriched in polar residues; sequence DSQSEMQEKQPSL. The segment at 558-603 is disordered; sequence DSQSEMQEKQPSLNGGAINGPSSWSALMGSKRDPEDSDVFEEDTHL. Phosphoserine is present on residues S569 and S594. The segment covering 592-603 has biased composition (acidic residues); sequence EDSDVFEEDTHL.

Belongs to the podocalyxin family. In terms of assembly, homodimer; disulfide-linked. Interacts with SELL, SELE and SELP. In terms of processing, glycosylated; contains chondroitin sulfate. Displays sialylated O-linked oligosaccharides. Sulfation is necessary for interaction with SELL. Sialylated O-linked oligosaccharides are necessary for interaction with SELL, SELE and SELP.

It is found in the membrane. In terms of biological role, acts as a ligand for vascular selectins. Mediates rapid rolling of leukocytes over vascular surfaces through high affinity divalent cation-dependent interactions with E-, P- and L-selectins. The polypeptide is Podocalyxin-like protein 2 (Podxl2) (Mus musculus (Mouse)).